A 150-amino-acid polypeptide reads, in one-letter code: MKARRQRKIIEIIHRQVIATQAELAQVLRKAGFAVTQATVSRDVKELGLLKASDGQTVRYLPPGEQPVAAAEERMVRLFRDYVWEVNANESLVIVKTLPGAAQGVASALDYARWPEILGTVAGDDTIFVAVKSQRDVGGIRERLAGLLEG.

It belongs to the ArgR family.

It localises to the cytoplasm. The protein operates within amino-acid biosynthesis; L-arginine biosynthesis [regulation]. Regulates arginine biosynthesis genes. The polypeptide is Arginine repressor (Desulforudis audaxviator (strain MP104C)).